The following is a 150-amino-acid chain: MALLHKEKLIECIDNELQNSGTLLLLTKNIVVSEISYNGNDYKYFTFNENHDLIGQENLKGATSNNIAKMVYNWIAKNPQTNKVWVGEPRIRIYFKNNLYHTNNNHVCIKDFYKVSISVSPNIFNDRSIWCTKCTSFYPFSSILSPNLFQ.

The protein belongs to the asfivirus A151R family. Monomer. Homodimer. Interacts with protein B119L. Interacts with membrane protein E248R. The cofactor is Zn(2+).

Its function is as follows. May participate in a redox cascade for the formation of disulfide bonds in viral proteins. This chain is Protein A151R, found in African swine fever virus (isolate Pig/Kenya/KEN-50/1950) (ASFV).